Consider the following 226-residue polypeptide: HTH-type transcriptional regulator Rv0324 (226 aa).

An HTH arsR-type domain is found at arginine 7 to leucine 101. The segment at residues valine 41–serine 64 is a DNA-binding region (H-T-H motif). The Rhodanese domain occupies glutamate 129–glutamate 218. The active-site Cysteine persulfide intermediate is cysteine 177.

Part of a regulatory network that coordinates tolerance to the antitubercular drug bedaquiline. The chain is HTH-type transcriptional regulator Rv0324 from Mycobacterium tuberculosis (strain ATCC 25618 / H37Rv).